The following is a 930-amino-acid chain: Kinesin-like protein KIN-7J (930 aa).

One can recognise a Kinesin motor domain in the interval 9 to 273; the sequence is KILVSVRVRP…TLGTVIRKLR (265 aa). 95–102 is a binding site for ATP; the sequence is GQTSSGKT. Disordered regions lie at residues 449-569 and 655-686; these read LKNS…IGTD and MQTKASPGRPNTSSISFDSGSSTSIDTRSLKD. The span at 459-468 shows a compositional bias: low complexity; that stretch reads SVEAQESQES. 2 stretches are compositionally biased toward basic and acidic residues: residues 473 to 482 and 533 to 558; these read EQMKNEERKM and AKLDEDATSRDKWESKQQQEADKDCN. The segment covering 666–681 has biased composition (low complexity); that stretch reads TSSISFDSGSSTSIDT. A Glycyl lysine isopeptide (Lys-Gly) (interchain with G-Cter in ubiquitin) cross-link involves residue Lys805.

This sequence belongs to the TRAFAC class myosin-kinesin ATPase superfamily. Kinesin family. KIN-7 subfamily.

The chain is Kinesin-like protein KIN-7J from Arabidopsis thaliana (Mouse-ear cress).